The following is a 351-amino-acid chain: Histidinol-phosphate aminotransferase 2 (351 aa).

An N6-(pyridoxal phosphate)lysine modification is found at Lys-210.

Belongs to the class-II pyridoxal-phosphate-dependent aminotransferase family. Histidinol-phosphate aminotransferase subfamily. As to quaternary structure, homodimer. Pyridoxal 5'-phosphate serves as cofactor.

The catalysed reaction is L-histidinol phosphate + 2-oxoglutarate = 3-(imidazol-4-yl)-2-oxopropyl phosphate + L-glutamate. It functions in the pathway amino-acid biosynthesis; L-histidine biosynthesis; L-histidine from 5-phospho-alpha-D-ribose 1-diphosphate: step 7/9. The polypeptide is Histidinol-phosphate aminotransferase 2 (hisC2) (Rhizobium meliloti (strain 1021) (Ensifer meliloti)).